The sequence spans 180 residues: NADH-quinone oxidoreductase subunit I (180 aa).

2 4Fe-4S ferredoxin-type domains span residues 48 to 80 (IVLT…LQKS) and 90 to 119 (EFFR…LTPD). C60, C63, C66, C70, C99, C102, C105, and C109 together coordinate [4Fe-4S] cluster. Residues 161 to 174 (KPKGDAENEAKPID) show a composition bias toward basic and acidic residues. Positions 161–180 (KPKGDAENEAKPIDVKSLLP) are disordered.

The protein belongs to the complex I 23 kDa subunit family. NDH-1 is composed of 14 different subunits. Subunits NuoA, H, J, K, L, M, N constitute the membrane sector of the complex. It depends on [4Fe-4S] cluster as a cofactor.

The protein localises to the cell inner membrane. It carries out the reaction a quinone + NADH + 5 H(+)(in) = a quinol + NAD(+) + 4 H(+)(out). Functionally, NDH-1 shuttles electrons from NADH, via FMN and iron-sulfur (Fe-S) centers, to quinones in the respiratory chain. The immediate electron acceptor for the enzyme in this species is believed to be ubiquinone. Couples the redox reaction to proton translocation (for every two electrons transferred, four hydrogen ions are translocated across the cytoplasmic membrane), and thus conserves the redox energy in a proton gradient. This Aeromonas hydrophila subsp. hydrophila (strain ATCC 7966 / DSM 30187 / BCRC 13018 / CCUG 14551 / JCM 1027 / KCTC 2358 / NCIMB 9240 / NCTC 8049) protein is NADH-quinone oxidoreductase subunit I.